The chain runs to 88 residues: Thioredoxin-2 (88 aa).

Residues 2–88 (SRVIHISSNE…YRNGAKVSEF (87 aa)) enclose the Thioredoxin domain. Residues Cys-31 and Cys-34 each act as nucleophile in the active site. Cys-31 and Cys-34 are disulfide-bonded.

The protein belongs to the thioredoxin family.

In terms of biological role, participates in various redox reactions through the reversible oxidation of its active center dithiol to a disulfide and catalyzes dithiol-disulfide exchange reactions. This Dictyostelium discoideum (Social amoeba) protein is Thioredoxin-2 (trxB).